The primary structure comprises 798 residues: MNLQLIFWIGLISSVCYVFGQADENRCLKANAKSCGECIQAGPNCGWCTNSTFLQEGMPTSARCDDLEALRKKGCHPDDIENPRGSKNIKKNKNVTNRSKGTAEKLQPEDITQIQPQQLVLQLRSGEPQTFTLKFKRAEDYPIDLYYLMDLSYSMKDDLENVKSLGTDLMNEMRRITSDFRIGFGSFVEKTVMPYISTTPAKLRNPCTSEQNCTSPFSYKNVLSLTDKGEVFNELVGKQRISGNLDSPEGGFDAIMQVAVCGSLIGWRNVTRLLVFSTDAGFHFAGDGKLGGIVLPNDGHCHLENDVYTMSHYYDYPSIAHLVQKLSENNIQTIFAVTEEFQPVYKELKNLIPKSAVGTLSANSSNVIQLIIDAYNSLSSEVILENSKLPEGVTINYKSYCKNGVNGTGENGRKCSNISIGDEVQFEISITANKCPNKNSETIKIKPLGFTEEVEIILQFICECECQSEGIPSSPKCHDGNGTFECGACRCNEGRVGRHCECSTDEVNSEDMDAYCRKENSSEICTNNGECVCGQCVCRKRDNTNEIYSGKFCECDNFNCDRSNGLICGGNGVCKCRVCECNPNYTGSACDCSLDTTSCMAVNGQICNGRGVCECGVCKCTDPKFQGPTCEMCQTCLGVCAEHKECVQCRAFNKGEKKDTCAQECSHFNITKVENRDKLPQPGQVDPLSHCKEKDVDDCWFYFTYSVNGNNEATVHVVETPECPTGPDIIPIVAGVVAGIVLIGLALLLIWKLLMIIHDRREFAKFEKEKMNAKWDTGENPIYKSAVTTVVNPKYEGK.

A signal peptide spans 1–20; the sequence is MNLQLIFWIGLISSVCYVFG. The Extracellular segment spans residues 21–728; sequence QADENRCLKA…ETPECPTGPD (708 aa). In terms of domain architecture, PSI spans 26 to 76; that stretch reads RCLKANAKSCGECIQAGPNCGWCTNSTFLQEGMPTSARCDDLEALRKKGCH. Cystine bridges form between C27-C45, C35-C464, C38-C64, C48-C75, C207-C213, C261-C301, C401-C415, C435-C462, C466-C486, C477-C489, C491-C500, C502-C533, C516-C531, C525-C536, C538-C553, C555-C576, C560-C574, C568-C579, C581-C590, C592-C615, C599-C613, C607-C618, C620-C630, C633-C636, C640-C691, C646-C665, C649-C661, and C699-C723. N-linked (GlcNAc...) asparagine glycosylation is present at N50. Residues 75 to 84 are compositionally biased toward basic and acidic residues; the sequence is CHPDDIENPR. The tract at residues 75-107 is disordered; it reads CHPDDIENPRGSKNIKKNKNVTNRSKGTAEKLQ. 2 N-linked (GlcNAc...) asparagine glycosylation sites follow: N94 and N97. Positions 140–378 constitute a VWFA domain; it reads DYPIDLYYLM…QLIIDAYNSL (239 aa). Residues S152 and S154 each coordinate Mg(2+). S154, D157, D158, and E189 together coordinate Ca(2+). The interval 207-213 is CX3CL1-binding; sequence CTSEQNC. N-linked (GlcNAc...) asparagine glycosylation occurs at N212. Residues N244, D246, P248, and E249 each contribute to the Ca(2+) site. E249 is a Mg(2+) binding site. N-linked (GlcNAc...) asparagine glycosylation occurs at N269. Residues 295-314 form a CX3CL1-binding region; it reads LPNDGHCHLENDVYTMSHYY. A362 is a binding site for Ca(2+). N363, N406, and N417 each carry an N-linked (GlcNAc...) asparagine glycan. The interval 383–465 is interaction with TMEM182; sequence ILENSKLPEG…IILQFICECE (83 aa). 4 consecutive I-EGF domains span residues 466-501, 502-554, 555-591, and 592-631; these read CQSEGIPSSPKCHDGNGTFECGACRCNEGRVGRHCE, CSTD…KFCE, CDNFNCDRSNGLICGGNGVCKCRVCECNPNYTGSACD, and CSLDTTSCMAVNGQICNGRGVCECGVCKCTDPKFQGPTCE. Residue N481 is glycosylated (N-linked (GlcNAc...) asparagine). N-linked (GlcNAc...) asparagine glycosylation is present at N520. An N-linked (GlcNAc...) asparagine glycan is attached at N584. N669 carries N-linked (GlcNAc...) asparagine glycosylation. Residues 729–749 form a helical membrane-spanning segment; that stretch reads IIPIVAGVVAGIVLIGLALLL. At 750–798 the chain is on the cytoplasmic side; it reads IWKLLMIIHDRREFAKFEKEKMNAKWDTGENPIYKSAVTTVVNPKYEGK. The signal for sorting from recycling endosomes; interaction with ACAP1 stretch occupies residues 762–767; sequence EFAKFE. The residue at position 777 (T777) is a Phosphothreonine. Y783 carries the phosphotyrosine modification. A Phosphoserine modification is found at S785. The interval 785–792 is interaction with ITGB1BP1; that stretch reads SAVTTVVN. T789 bears the Phosphothreonine mark. K794 bears the N6-acetyllysine; alternate mark. A Glycyl lysine isopeptide (Lys-Gly) (interchain with G-Cter in SUMO1); alternate cross-link involves residue K794.

This sequence belongs to the integrin beta chain family. As to quaternary structure, interacts with seprase FAP (seprase); the interaction occurs at the cell surface of invadopodia membrane in a collagen-dependent manner. Heterodimer of an alpha and a beta subunit. Beta-1 associates with either alpha-1, alpha-2, alpha-3, alpha-4, alpha-5, alpha-6, alpha-7, alpha-8, alpha-9, alpha-10, alpha-11 or alpha-V. ITGA6:ITGB1 is found in a complex with CD9; interaction takes place in oocytes and is involved in sperm-egg fusion. Binds LGALS3BP and NMRK2, when associated with alpha-7, but not with alpha-5. Interacts with FLNA, FLNB, FLNC and RANBP9. Interacts with KRT1 in the presence of RACK1 and SRC. Interacts with JAML; integrin alpha-4/beta-1 may regulate leukocyte to endothelial cells adhesion by controlling JAML homodimerization. Interacts with RAB21. Interacts (via the cytoplasmic region) with RAB25 (via the hypervariable C-terminal region). Interacts with MYO10. Interacts with ITGB1BP1 (via C-terminal region); the interaction is a prerequisite for focal adhesion disassembly. Interacts with TLN1; the interaction is prevented by competitive binding of ITGB1BP1. Interacts with ACAP1; required for ITGB1 recycling. Interacts with ASAP3. Interacts with FERMT2; the interaction is inhibited in presence of ITGB1BP1. Interacts with DAB2. Interacts with FGR and HCK. Interacts with alpha-7A and alpha-7B in adult skeletal muscle. Interacts with alpha-7B in cardiomyocytes of adult heart. Interacts with EMP2; the interaction may be direct or indirect and ITGB1 has a heterodimer form. ITGA5:ITGB1 interacts with CCN3. ITGA4:ITGB1 is found in a ternary complex with CX3CR1 and CX3CL1. ITGA5:ITGB1 interacts with FBN1. ITGA5:ITGB1 interacts with IL1B. Interacts with MDK. ITGA4:ITGB1 interacts with MDK; this interaction mediates MDK-induced osteoblast cells migration through PXN phosphorylation. ITGA6:ITGB1 interacts with MDK; this interaction mediates MDK-induced neurite-outgrowth. ITGA5:ITGB1 interacts with ACE2. Interacts with TMEM182 and LAMB1. Interacts with tensin TNS3; TNS3 also interacts with PEAK1, thus acting as an adapter molecule to bridge the association of PEAK1 with ITGB1. Interacts with tensin TNS4; the interaction displaces tensin TNS3 from the ITGB1 cytoplasmic tail and promotes ITGB1 stability. Integrin ITGA9:ITGB1 interacts with SPP1/OPN (via N-terminus). Integrin ITGA9:ITGB1 interacts with TNC/TNFN3 (via the 3rd Fibronectin type-III domain). Integrins ITGA4:ITGB1 and ITGA9:ITGB1 interact with SVEP1 (via Sushi domain 21); thereby inhibit Ca(2+) intracellular signaling and as a result repress vasocontraction. ITGA4:ITGB1 and ITGA5:ITGB1 interacts with SELP. Interacts with CD248. ITGA5:ITGB1 interacts with IGFBP1. ITGA4:ITGB1 interacts with BCAM. Interacts with ADGRG6. As to expression, expressed in the spleen, thymus, alveolar macrophages, bone marrow, liver and kidney.

It is found in the cell membrane. It localises to the cell projection. The protein resides in the invadopodium membrane. Its subcellular location is the ruffle membrane. The protein localises to the recycling endosome. It is found in the melanosome. It localises to the lamellipodium. The protein resides in the ruffle. Its subcellular location is the cell junction. The protein localises to the focal adhesion. Functionally, integrins alpha-1/beta-1, alpha-2/beta-1, alpha-10/beta-1 and alpha-11/beta-1 are receptors for collagen. Integrins alpha-1/beta-1 and alpha-2/beta-2 recognize the proline-hydroxylated sequence G-F-P-G-E-R in collagen. Integrins alpha-2/beta-1, alpha-3/beta-1, alpha-4/beta-1, alpha-5/beta-1, alpha-8/beta-1, alpha-10/beta-1, alpha-11/beta-1 and alpha-V/beta-1 are receptors for fibronectin. Alpha-4/beta-1 recognizes one or more domains within the alternatively spliced CS-1 and CS-5 regions of fibronectin. Integrin alpha-5/beta-1 is a receptor for fibrinogen. Integrin alpha-1/beta-1, alpha-2/beta-1, alpha-6/beta-1 and alpha-7/beta-1 are receptors for lamimin. Integrin alpha-6/beta-1 (ITGA6:ITGB1) is present in oocytes and is involved in sperm-egg fusion. Integrin alpha-4/beta-1 is a receptor for VCAM1 and recognizes the sequence Q-I-D-S in VCAM1. Integrin alpha-9/beta-1 is a receptor for VCAM1, cytotactin and osteopontin. It recognizes the sequence A-E-I-D-G-I-E-L in cytotactin. Integrin alpha-3/beta-1 is a receptor for epiligrin, thrombospondin and CSPG4. Integrin alpha-3/beta-1 provides a docking site for FAP (seprase) at invadopodia plasma membranes in a collagen-dependent manner and hence may participate in the adhesion, formation of invadopodia and matrix degradation processes, promoting cell invasion. Alpha-3/beta-1 may mediate with LGALS3 the stimulation by CSPG4 of endothelial cells migration. Integrin alpha-V/beta-1 is a receptor for vitronectin. Beta-1 integrins recognize the sequence R-G-D in a wide array of ligands. When associated with alpha-7/beta-1 integrin, regulates cell adhesion and laminin matrix deposition. Involved in promoting endothelial cell motility and angiogenesis. Involved in osteoblast compaction through the fibronectin fibrillogenesis cell-mediated matrix assembly process and the formation of mineralized bone nodules. May be involved in up-regulation of the activity of kinases such as PKC via binding to KRT1. Together with KRT1 and RACK1, serves as a platform for SRC activation or inactivation. Plays a mechanistic adhesive role during telophase, required for the successful completion of cytokinesis. ITGA4:ITGB1 binds to fractalkine (CX3CL1) and may act as its coreceptor in CX3CR1-dependent fractalkine signaling. ITGA4:ITGB1 and ITGA5:ITGB1 bind to PLA2G2A via a site (site 2) which is distinct from the classical ligand-binding site (site 1) and this induces integrin conformational changes and enhanced ligand binding to site 1. ITGA5:ITGB1 acts as a receptor for fibrillin-1 (FBN1) and mediates R-G-D-dependent cell adhesion to FBN1. ITGA5:ITGB1 acts as a receptor for fibronectin FN1 and mediates R-G-D-dependent cell adhesion to FN1. ITGA5:ITGB1 is a receptor for IL1B and binding is essential for IL1B signaling. ITGA5:ITGB3 is a receptor for soluble CD40LG and is required for CD40/CD40LG signaling. Plays an important role in myoblast differentiation and fusion during skeletal myogenesis. ITGA9:ITGB1 may play a crucial role in SVEP1/polydom-mediated myoblast cell adhesion. Integrins ITGA9:ITGB1 and ITGA4:ITGB1 repress PRKCA-mediated L-type voltage-gated channel Ca(2+) influx and ROCK-mediated calcium sensitivity in vascular smooth muscle cells via their interaction with SVEP1, thereby inhibit vasocontraction. The sequence is that of Integrin beta-1 (ITGB1) from Sus scrofa (Pig).